We begin with the raw amino-acid sequence, 331 residues long: Cathepsin 7 (331 aa).

Residues 1-17 (MTVAVFLAILCLRAALA) form the signal peptide. Positions 18-111 (APRPDYSLDA…GKHIQKRNVK (94 aa)) are cleaved as a propeptide — activation peptide. The Nuclear localization signal signature appears at 33–50 (KRNNAKTYSPEEEKQRRA). N-linked (GlcNAc...) asparagine glycosylation occurs at N72. 3 disulfide bridges follow: C133–C176, C167–C209, and C267–C320. C136 is an active-site residue. Active-site residues include H274 and N298.

This sequence belongs to the peptidase C1 family.

It is found in the endosome. The protein resides in the lysosome. Its subcellular location is the cytoplasm. The protein localises to the perinuclear region. It localises to the golgi apparatus. It is found in the nucleus. The protein resides in the secreted. Its subcellular location is the extracellular space. Involved in trophoblast cell proliferation and differentiation probably by affecting mitotic cell cycle progression. Proteolytic activity and nuclear localization are essential for its role in cell cycle progression. This Rattus norvegicus (Rat) protein is Cathepsin 7 (Cts7).